Here is a 347-residue protein sequence, read N- to C-terminus: Protein RecA (347 aa).

Residue 65–72 (GPESSGKT) participates in ATP binding. The tract at residues 325-347 (KLGISDGDVEETEDAPKSLFDEE) is disordered. Residues 338–347 (DAPKSLFDEE) are compositionally biased toward basic and acidic residues.

This sequence belongs to the RecA family.

The protein resides in the cytoplasm. Can catalyze the hydrolysis of ATP in the presence of single-stranded DNA, the ATP-dependent uptake of single-stranded DNA by duplex DNA, and the ATP-dependent hybridization of homologous single-stranded DNAs. It interacts with LexA causing its activation and leading to its autocatalytic cleavage. This chain is Protein RecA, found in Staphylococcus aureus (strain Mu3 / ATCC 700698).